The chain runs to 489 residues: Homoserine O-acetyltransferase (489 aa).

One can recognise an AB hydrolase-1 domain in the interval 69-438 (LLLCHALSGS…AEGHDGFLLE (370 aa)). S163 (nucleophile) is an active-site residue. Residues 255–329 (ASRHPYPDRL…QTTDSSSLNQ (75 aa)) are disordered. Positions 280–290 (EGNRNRRERPC) are enriched in basic and acidic residues. Over residues 299-329 (SESALNSPASSVSSLPSLGASQTTDSSSLNQ) the composition is skewed to low complexity. Catalysis depends on residues D403 and H432.

This sequence belongs to the AB hydrolase superfamily. MetX family.

The protein resides in the cytoplasm. It catalyses the reaction L-homoserine + acetyl-CoA = O-acetyl-L-homoserine + CoA. It functions in the pathway amino-acid biosynthesis; L-methionine biosynthesis via de novo pathway; O-acetyl-L-homoserine from L-homoserine: step 1/1. Commits homoserine to the methionine biosynthesis pathway by catalyzing its O-acetylation. The chain is Homoserine O-acetyltransferase (met6) from Schizosaccharomyces pombe (strain 972 / ATCC 24843) (Fission yeast).